Here is an 85-residue protein sequence, read N- to C-terminus: Acylphosphatase (85 aa).

The Acylphosphatase-like domain occupies 3–85 (AARFVVSGVV…PARFRRLKTL (83 aa)). Residues Arg-18 and Asn-36 contribute to the active site. Residues 66 to 85 (PPRSRRSRARPARFRRLKTL) are disordered.

The protein belongs to the acylphosphatase family.

The enzyme catalyses an acyl phosphate + H2O = a carboxylate + phosphate + H(+). This Xanthomonas axonopodis pv. citri (strain 306) protein is Acylphosphatase (acyP).